The chain runs to 865 residues: DNA-directed RNA polymerase subunit Rpo1N (865 aa).

Zn(2+) contacts are provided by C60, C63, C70, H73, C100, C103, C146, and C149. Residues D451, D453, and D455 each contribute to the Mg(2+) site. Positions 500 to 531 (EHTSSQGKRLFSVRSRPPDPQEGRAPPPDREG) are disordered. Residues 515-531 (RPPDPQEGRAPPPDREG) show a composition bias toward basic and acidic residues.

The protein belongs to the RNA polymerase beta' chain family. As to quaternary structure, part of the RNA polymerase complex. Requires Mg(2+) as cofactor. Zn(2+) serves as cofactor.

The protein localises to the cytoplasm. It catalyses the reaction RNA(n) + a ribonucleoside 5'-triphosphate = RNA(n+1) + diphosphate. Functionally, DNA-dependent RNA polymerase (RNAP) catalyzes the transcription of DNA into RNA using the four ribonucleoside triphosphates as substrates. Forms the clamp head domain. The chain is DNA-directed RNA polymerase subunit Rpo1N from Methanothermobacter thermautotrophicus (strain Winter) (Methanobacterium thermoautotrophicum).